Reading from the N-terminus, the 157-residue chain is Deoxyuridine 5'-triphosphate nucleotidohydrolase (157 aa).

Substrate-binding positions include 73-75 (RSG), Asn86, and 90-92 (TID).

It belongs to the dUTPase family. Mg(2+) is required as a cofactor.

The enzyme catalyses dUTP + H2O = dUMP + diphosphate + H(+). It participates in pyrimidine metabolism; dUMP biosynthesis; dUMP from dCTP (dUTP route): step 2/2. Its function is as follows. This enzyme is involved in nucleotide metabolism: it produces dUMP, the immediate precursor of thymidine nucleotides and it decreases the intracellular concentration of dUTP so that uracil cannot be incorporated into DNA. In Azorhizobium caulinodans (strain ATCC 43989 / DSM 5975 / JCM 20966 / LMG 6465 / NBRC 14845 / NCIMB 13405 / ORS 571), this protein is Deoxyuridine 5'-triphosphate nucleotidohydrolase.